We begin with the raw amino-acid sequence, 352 residues long: 26S proteasome regulatory subunit rpn-8 (352 aa).

The 137-residue stretch at 16–152 (VSVAPLVLLS…TDAYFAVDEI (137 aa)) folds into the MPN domain. Residues 303–352 (NRQQQEENDAKKKEGENGEKKEGADKKEGSPAAANGESKEKENSPKEKKK) form a disordered region. Basic and acidic residues-rich tracts occupy residues 306-331 (QQEE…KKEG) and 339-352 (ESKE…EKKK).

Belongs to the peptidase M67A family.

In terms of biological role, acts as a regulatory subunit of the 26S proteasome which is involved in the ATP-dependent degradation of ubiquitinated proteins. The sequence is that of 26S proteasome regulatory subunit rpn-8 (rpn-8) from Neurospora crassa (strain ATCC 24698 / 74-OR23-1A / CBS 708.71 / DSM 1257 / FGSC 987).